The following is a 696-amino-acid chain: SEC14 domain and spectrin repeat-containing protein 1 (696 aa).

A CRAL-TRIO domain is found at 1 to 153 (MDATVILPIL…EFGGSLTYDH (153 aa)). Spectrin repeat units lie at residues 272–378 (TQLD…NLLQ), 381–494 (LDFH…LKML), and 500–602 (FKCE…HRLE).

The protein belongs to the SOLO family.

Its function is as follows. May act as the primary docking protein directing membrane turnover and assembly of the transient receptor potential channels trpc4 and trpc5. Binds phospholipids. The chain is SEC14 domain and spectrin repeat-containing protein 1 (sestd1) from Xenopus tropicalis (Western clawed frog).